Consider the following 150-residue polypeptide: Small ribosomal subunit protein eS6 (150 aa).

The protein belongs to the eukaryotic ribosomal protein eS6 family.

The chain is Small ribosomal subunit protein eS6 from Caldivirga maquilingensis (strain ATCC 700844 / DSM 13496 / JCM 10307 / IC-167).